The chain runs to 201 residues: Small ribosomal subunit protein uS2 (201 aa).

It belongs to the universal ribosomal protein uS2 family. In terms of assembly, part of the 50S ribosomal subunit.

The chain is Small ribosomal subunit protein uS2 from Thermococcus kodakarensis (strain ATCC BAA-918 / JCM 12380 / KOD1) (Pyrococcus kodakaraensis (strain KOD1)).